The primary structure comprises 252 residues: Mannose-P-dolichol utilization defect 1 protein homolog (252 aa).

The region spanning 34–100 (KALLSKGLGL…HGYPFSAWGD (67 aa)) is the PQ-loop 1 domain. 7 consecutive transmembrane segments (helical) span residues 41-61 (LGLA…LKIL), 69-89 (INIV…SYNF), 98-118 (WGDS…VLFF), 126-146 (GLFL…LTPM), 148-168 (VLFT…LSQA), 180-200 (LSAA…FTSI), and 207-227 (MIIL…GQLI). Positions 157 to 211 (IPILLVGKLSQAYTNYQAGSTGQLSAATVIMMFAGSVARIFTSIQETGDFMIILT) constitute a PQ-loop 2 domain.

It belongs to the MPDU1 (TC 2.A.43.3) family.

The protein resides in the membrane. The protein is Mannose-P-dolichol utilization defect 1 protein homolog of Drosophila melanogaster (Fruit fly).